The chain runs to 877 residues: DNA repair protein rad16 (877 aa).

Ser71 is subject to Phosphoserine; by CK2. Residues 440–490 form a disordered region; it reads SKSIKKPEPSKEREASNTTSRKGVPPSKRRRVRGGNNATSRTTSDNTDAND. Over residues 444–454 the composition is skewed to basic and acidic residues; it reads KKPEPSKEREA. Positions 475 to 490 are enriched in polar residues; it reads NNATSRTTSDNTDAND. Residues 652–732 enclose the ERCC4 domain; the sequence is RVIVDLREFR…IPVLLIEFEQ (81 aa).

The protein belongs to the XPF family. Heterodimer composed of rad16 and swi10.

Its subcellular location is the nucleus. It localises to the cytoplasm. The protein resides in the cytoskeleton. The protein localises to the microtubule organizing center. It is found in the spindle pole body. Its function is as follows. Endonuclease that specifically degrades single-stranded DNA and which is involved in nucleotide excision repair of DNA damaged with UV light, bulky adducts, or cross-linking agents. Required for double strand break-induced interchromosomal gene conversion. This is DNA repair protein rad16 (rad16) from Schizosaccharomyces pombe (strain 972 / ATCC 24843) (Fission yeast).